The primary structure comprises 277 residues: Digeranylgeranylglyceryl phosphate synthase (277 aa).

Helical transmembrane passes span 16–36, 40–60, 93–113, 129–149, 153–173, 199–218, 222–244, and 253–273; these read ILAGIVGILGSLVAYEGIPPV, ILIFLVVYFGCSAGNTINDYF, FIGLIIALLLGWSAFLFALGA, FIGNVTVALLTAATPIYGAVG, IDLAGYLAICAFLVNVSREIM, SGIIASIFGFLTIISSFLPV, IGLGYLPIIIVDIMIAKASIDVL, and GQKILKFATFIAVISFLLGAL.

The protein belongs to the UbiA prenyltransferase family. DGGGP synthase subfamily. Mg(2+) is required as a cofactor.

It localises to the cell membrane. It carries out the reaction sn-3-O-(geranylgeranyl)glycerol 1-phosphate + (2E,6E,10E)-geranylgeranyl diphosphate = 2,3-bis-O-(geranylgeranyl)-sn-glycerol 1-phosphate + diphosphate. It functions in the pathway membrane lipid metabolism; glycerophospholipid metabolism. In terms of biological role, prenyltransferase that catalyzes the transfer of the geranylgeranyl moiety of geranylgeranyl diphosphate (GGPP) to the C2 hydroxyl of (S)-3-O-geranylgeranylglyceryl phosphate (GGGP). This reaction is the second ether-bond-formation step in the biosynthesis of archaeal membrane lipids. This Pyrococcus horikoshii (strain ATCC 700860 / DSM 12428 / JCM 9974 / NBRC 100139 / OT-3) protein is Digeranylgeranylglyceryl phosphate synthase.